A 610-amino-acid chain; its full sequence is UvrABC system protein C (610 aa).

One can recognise a GIY-YIG domain in the interval 13-92 (TLPGVYLMKN…IKQHKPRYNA (80 aa)). Positions 204–239 (KDVLKDLYEEMRLLSEQLEFEKANHLLRTIRYIEKT) constitute a UVR domain.

The protein belongs to the UvrC family. As to quaternary structure, interacts with UvrB in an incision complex.

The protein localises to the cytoplasm. Its function is as follows. The UvrABC repair system catalyzes the recognition and processing of DNA lesions. UvrC both incises the 5' and 3' sides of the lesion. The N-terminal half is responsible for the 3' incision and the C-terminal half is responsible for the 5' incision. The protein is UvrABC system protein C of Protochlamydia amoebophila (strain UWE25).